A 711-amino-acid chain; its full sequence is MLNPIVREFQYGQHTVTLETGMMARQATAAVMVSMDDTAVFVTVVGQKKAKPGQDFFPLTVNYQERTYAAGRIPGSFFRREGRPSEGETLIARLIDRPVRPLFPEGFVNEVQVIATVVSVNPQVNPDIVAMIGASAALSLSGIPFNGPIGAARVGYINDQYVLNPTQDELKESKLDLVVAGTEAAVLMVESEAELLSEDTMLGAVVFGHEQQQVVIQAINDLVKEAGKPRWDWQPEAVNDALNARVAALAESRLSDAYRITDKQERYAQVDVIKSETIEQLIAEDETLDANELGEILHAIEKNVVRSRVLAGEPRIDGREKDMIRGLDVRTGVLPRTHGSALFTRGETQALVTATLGTARDAQVLDELMGERTDSFLFHYNFPPYSVGETGMVGSPKRREIGHGRLAKRGVLAVMPDMDKFPYTVRVVSEITESNGSSSMASVCGASLALMDAGVPIKAAVAGIAMGLVKEGDNYVVLSDILGDEDHLGDMDFKVAGSRDGISALQMDIKIEGITKEIMQVALNQAKGARLHILGVMEQAINAPRGDISEFAPRIHTIKISTDKIKDVIGKGGSVIRALTEETGTTIEIEDDGTVKIAATDGEKAKYAIRRIEEITAEIEVGRIYNSKVTRIVDFGAFVAIGGGKEGLVHISQIADKRVEKVTDYLQMGQEVPVKVLEVDRQGRVRLSIKEATEQSQPAAAPEAPASEQAE.

Mg(2+) contacts are provided by D486 and D492. In terms of domain architecture, KH spans P553 to I612. One can recognise an S1 motif domain in the interval G622–K690. The segment at I689–E711 is disordered. A compositionally biased stretch (low complexity) spans E694–E711.

The protein belongs to the polyribonucleotide nucleotidyltransferase family. Component of the RNA degradosome, which is a multiprotein complex involved in RNA processing and mRNA degradation. The cofactor is Mg(2+).

The protein localises to the cytoplasm. The catalysed reaction is RNA(n+1) + phosphate = RNA(n) + a ribonucleoside 5'-diphosphate. Functionally, involved in mRNA degradation. Catalyzes the phosphorolysis of single-stranded polyribonucleotides processively in the 3'- to 5'-direction. This is Polyribonucleotide nucleotidyltransferase from Salmonella typhi.